Consider the following 757-residue polypeptide: Polyribonucleotide nucleotidyltransferase (757 aa).

Mg(2+) contacts are provided by aspartate 489 and aspartate 495. One can recognise a KH domain in the interval 556 to 615 (PKILCYKIDKDVVHKVIGSGGKTIRGISSDTSAKIDIDQNNYVYIMADTEEALMEAKTRV). The 69-residue stretch at 632-700 (GELYDGKIVS…SDGKIKLTMR (69 aa)) folds into the S1 motif domain. Positions 702–757 (DEDRVGSGGSSSSPKKRFGAHPRKNGKDNRSNNSERGFNERSGSAEGSSISRKRFF) are disordered. The span at 715–725 (PKKRFGAHPRK) shows a compositional bias: basic residues. The span at 732 to 751 (SNNSERGFNERSGSAEGSSI) shows a compositional bias: polar residues.

This sequence belongs to the polyribonucleotide nucleotidyltransferase family. Mg(2+) is required as a cofactor.

The protein resides in the cytoplasm. It catalyses the reaction RNA(n+1) + phosphate = RNA(n) + a ribonucleoside 5'-diphosphate. Functionally, involved in mRNA degradation. Catalyzes the phosphorolysis of single-stranded polyribonucleotides processively in the 3'- to 5'-direction. This Neorickettsia sennetsu (strain ATCC VR-367 / Miyayama) (Ehrlichia sennetsu) protein is Polyribonucleotide nucleotidyltransferase.